A 251-amino-acid chain; its full sequence is MPTFLLVNDDGYFSPGINALREALKSLGRVVVVAPDRNLSGVGHSLTFTEPLKMRKIDTDFYTVIDGTPADCVHLGYRVILEEKKPDLVLSGINEGPNLGEDITYSGTVSGAMEGRILGIPSIAFSAFGRENIMFEEIAKVCVDIVKKVLNEGIPEDTYLNVNIPNLRYEEIKGIKVTRQGKRAYKERVFKYIDPYGKPFYWIAAEEFGWHAEEGTDYWAVLNGYVSVTPLHLDLTNYKVMKSIKYLEDSP.

A divalent metal cation-binding residues include Asp9, Asp10, Ser40, and Asn94.

The protein belongs to the SurE nucleotidase family. The cofactor is a divalent metal cation.

It localises to the cytoplasm. The catalysed reaction is a ribonucleoside 5'-phosphate + H2O = a ribonucleoside + phosphate. Functionally, nucleotidase that shows phosphatase activity on nucleoside 5'-monophosphates. The polypeptide is 5'-nucleotidase SurE (Aquifex aeolicus (strain VF5)).